A 338-amino-acid polypeptide reads, in one-letter code: MTLNIGVIGTGAIGQDHIRRCSFALSGAKVVAVNDINLEQAKKVVNDLGIGAEVYADAHELINAANVEAILVTSWGPTHEEFVLAAIKAGKPVFCEKPLAVTAQGCKNIVDAETAFGKRLVQVGFMRPYDQGYRALKAVIDSGRIGEPLMLHCAHRNARVGQAYATDMAITDTLIHEINVLSWLLDDHYVSAQVIFPRKSARALAHLKDPQIVLLETAKGTRIDVEVFVNCQYGYDIQCEVVGETGIARLPEPSSVQLRSEARLSNEILVDWKDRFIAAYDVELQDFIDAVGAGRLTGPSAWDGYTAAVTADACVAAQGSGKVEPIVLPERPAFYAPA.

This sequence belongs to the Gfo/Idh/MocA family. In terms of assembly, homotetramer.

The enzyme catalyses myo-inositol + NAD(+) = scyllo-inosose + NADH + H(+). Functionally, involved in the oxidation of myo-inositol (MI) to 2-keto-myo-inositol (2KMI or 2-inosose). This is Inositol 2-dehydrogenase from Azotobacter vinelandii (strain DJ / ATCC BAA-1303).